The chain runs to 132 residues: Small ribosomal subunit protein bS6 (132 aa).

The tract at residues 99–132 is disordered; sequence ASPMVKAKDERRGDRREDFANETADDADAGDSEE. Residues 104-117 are compositionally biased toward basic and acidic residues; it reads KAKDERRGDRREDF. Residues 121–132 are compositionally biased toward acidic residues; the sequence is TADDADAGDSEE.

Belongs to the bacterial ribosomal protein bS6 family.

Its function is as follows. Binds together with bS18 to 16S ribosomal RNA. The polypeptide is Small ribosomal subunit protein bS6 (Serratia proteamaculans (strain 568)).